The chain runs to 107 residues: MTERNASGRMNTKGRSIKETKKAMNEEVGPFTLFLVTLGADLINALQREGRLGLSHLGMAEHKRFENQVKIRKGREKTERKAVAPVRAREIKNKDSCFPHTHIGCEK.

Residues 1 to 14 (MTERNASGRMNTKG) show a composition bias toward polar residues. Positions 1 to 20 (MTERNASGRMNTKGRSIKET) are disordered.

The protein resides in the mitochondrion. This is an uncharacterized protein from Arabidopsis thaliana (Mouse-ear cress).